Reading from the N-terminus, the 689-residue chain is Transcription termination factor Rho (689 aa).

Polar residues predominate over residues 1–20 (MPRTPKNQNLEQNTQTQSLT). Disordered stretches follow at residues 1 to 90 (MPRT…KQPV) and 151 to 213 (AQAQ…NRNN). Basic residues predominate over residues 52–65 (PKRRGRKPNPKTKA). 2 stretches are compositionally biased toward low complexity: residues 170–183 (NAQQ…QNGE) and 191–213 (NNQN…NRNN). The Rho RNA-BD domain occupies 287 to 362 (IIYTEGVLEV…RRIDRVNFEE (76 aa)). ATP is bound by residues 405 to 410 (GKGQRS), 417 to 422 (RTGKTV), and Arg448.

Belongs to the Rho family. Homohexamer. The homohexamer assembles into an open ring structure.

In terms of biological role, facilitates transcription termination by a mechanism that involves Rho binding to the nascent RNA, activation of Rho's RNA-dependent ATPase activity, and release of the mRNA from the DNA template. In Fibrobacter succinogenes (strain ATCC 19169 / S85), this protein is Transcription termination factor Rho.